The primary structure comprises 411 residues: LL-diaminopimelate aminotransferase 1 (411 aa).

The substrate site is built by Tyr15 and Gly42. Pyridoxal 5'-phosphate-binding positions include Tyr72, 108–109, Tyr132, Asn187, Tyr218, and 246–248; these read SK and SFS. Substrate-binding residues include Lys109, Tyr132, and Asn187. N6-(pyridoxal phosphate)lysine is present on Lys249. Residues Arg257 and Asn292 each contribute to the pyridoxal 5'-phosphate site. Substrate-binding residues include Asn292 and Arg388.

Belongs to the class-I pyridoxal-phosphate-dependent aminotransferase family. LL-diaminopimelate aminotransferase subfamily. In terms of assembly, homodimer. The cofactor is pyridoxal 5'-phosphate.

The catalysed reaction is (2S,6S)-2,6-diaminopimelate + 2-oxoglutarate = (S)-2,3,4,5-tetrahydrodipicolinate + L-glutamate + H2O + H(+). Its pathway is amino-acid biosynthesis; L-lysine biosynthesis via DAP pathway; LL-2,6-diaminopimelate from (S)-tetrahydrodipicolinate (aminotransferase route): step 1/1. Involved in the synthesis of meso-diaminopimelate (m-DAP or DL-DAP), required for both lysine and peptidoglycan biosynthesis. Catalyzes the direct conversion of tetrahydrodipicolinate to LL-diaminopimelate. This is LL-diaminopimelate aminotransferase 1 from Nostoc sp. (strain PCC 7120 / SAG 25.82 / UTEX 2576).